Reading from the N-terminus, the 103-residue chain is Large ribosomal subunit protein uL24 (103 aa).

Belongs to the universal ribosomal protein uL24 family. As to quaternary structure, part of the 50S ribosomal subunit.

Its function is as follows. One of two assembly initiator proteins, it binds directly to the 5'-end of the 23S rRNA, where it nucleates assembly of the 50S subunit. In terms of biological role, one of the proteins that surrounds the polypeptide exit tunnel on the outside of the subunit. In Christiangramia forsetii (strain DSM 17595 / CGMCC 1.15422 / KT0803) (Gramella forsetii), this protein is Large ribosomal subunit protein uL24.